We begin with the raw amino-acid sequence, 241 residues long: RecQ-mediated genome instability protein 1 (241 aa).

Belongs to the RMI1 family. Forms a complex with SGS1 and TOP3.

It localises to the cytoplasm. The protein resides in the nucleus. In terms of biological role, structure-specific DNA-binding protein with a preference for cruciform structures. Also binds single-stranded DNA (ssDNA). Functions together with SGS1 and TOP3 to maintain genome integrity. Essential for proper meiotic cell division. Required for normal S-phase progression and DNA damage response. Required for resistance to the DNA-damaging agent methyl methanesulfonate (MMS). The protein is RecQ-mediated genome instability protein 1 of Saccharomyces cerevisiae (strain ATCC 204508 / S288c) (Baker's yeast).